The following is a 360-amino-acid chain: Phospho-N-acetylmuramoyl-pentapeptide-transferase (360 aa).

10 consecutive transmembrane segments (helical) span residues 26-46 (AILG…AMIR), 70-90 (GTPT…TLLW), 97-117 (FVWV…IDDY), 134-154 (FFWQ…TAQA), 168-188 (VAIQ…VGAS), 199-219 (GLAI…AYLS), 236-256 (VGDL…FLWF), 263-283 (VFMG…LAVV), 288-308 (IVLV…IMQV), and 338-358 (VIVR…ATLK).

The protein belongs to the glycosyltransferase 4 family. MraY subfamily. Mg(2+) is required as a cofactor.

The protein resides in the cell inner membrane. It catalyses the reaction UDP-N-acetyl-alpha-D-muramoyl-L-alanyl-gamma-D-glutamyl-meso-2,6-diaminopimeloyl-D-alanyl-D-alanine + di-trans,octa-cis-undecaprenyl phosphate = di-trans,octa-cis-undecaprenyl diphospho-N-acetyl-alpha-D-muramoyl-L-alanyl-D-glutamyl-meso-2,6-diaminopimeloyl-D-alanyl-D-alanine + UMP. It functions in the pathway cell wall biogenesis; peptidoglycan biosynthesis. In terms of biological role, catalyzes the initial step of the lipid cycle reactions in the biosynthesis of the cell wall peptidoglycan: transfers peptidoglycan precursor phospho-MurNAc-pentapeptide from UDP-MurNAc-pentapeptide onto the lipid carrier undecaprenyl phosphate, yielding undecaprenyl-pyrophosphoryl-MurNAc-pentapeptide, known as lipid I. This chain is Phospho-N-acetylmuramoyl-pentapeptide-transferase, found in Thioalkalivibrio sulfidiphilus (strain HL-EbGR7).